The following is a 755-amino-acid chain: 17S U2 SnRNP complex component HTATSF1 (755 aa).

Disordered stretches follow at residues 1 to 53 (MSGT…YEWD) and 81 to 122 (GASS…KAES). Serine 2 carries the N-acetylserine modification. Residues 90 to 122 (EDVHARTAEEPPQEKAPEPTDARKKGEKRKAES) are compositionally biased toward basic and acidic residues. RRM domains lie at 133-218 (TNVY…VAKF) and 264-349 (RVVI…AWDG). Positions 259–353 (RMRHERVVII…AQAWDGTTDY (95 aa)) are U2AF homology motif (UHM). Lysine 297 carries the N6-acetyllysine modification. Residues 380–415 (RGLRRSDSVSASERAGPSRARHFSEHPSTSKMNAQE) are disordered. The interval 381–755 (GLRRSDSVSA…LSSDDDDDDI (375 aa)) is mediates interaction with the P-TEFb complex. Residues serine 387, serine 403, serine 407, and serine 409 each carry the phosphoserine modification. The segment covering 405-415 (HPSTSKMNAQE) has biased composition (polar residues). Residues lysine 429 and lysine 430 each participate in a glycyl lysine isopeptide (Lys-Gly) (interchain with G-Cter in SUMO2) cross-link. The segment at 433–755 (KTEDGGEFEE…LSSDDDDDDI (323 aa)) is disordered. Residues serine 445, serine 452, and serine 453 each carry the phosphoserine modification. Residues 462–476 (CPEKESEEGCPKRGF) show a composition bias toward basic and acidic residues. Serine 481, serine 485, serine 494, serine 498, serine 521, and serine 529 each carry phosphoserine. Residues 508–538 (LKNDCEENGLAKESEDDLNKESEEEVGPTKE) are compositionally biased toward basic and acidic residues. A compositionally biased stretch (acidic residues) spans 539–552 (SEEDDSEKESDEDC). Residues 553–563 (SEKQSEDGSER) show a composition bias toward basic and acidic residues. Residues serine 557, serine 561, and serine 579 each carry the phosphoserine modification. The span at 564–579 (EFEENGLEKDLDEEGS) shows a compositional bias: acidic residues. Residues 580 to 590 (EKELHENVLDK) are compositionally biased toward basic and acidic residues. The segment covering 591–606 (ELEENDSENSEFEDDG) has biased composition (acidic residues). Phosphoserine occurs at positions 597, 600, 607, 616, and 624. Acidic residues-rich tracts occupy residues 613-633 (EEGSEREFDEDSDEKEEEEDT) and 640-651 (DESDEKEDEEYA). At threonine 633 the chain carries Phosphothreonine. Serine 642 carries the phosphoserine modification. The segment covering 652–674 (DEKGLEAADKKAEEGDADEKLFE) has biased composition (basic and acidic residues). The span at 675-713 (ESDDKEDEDADGKEVEDADEKLFEDDDSNEKLFDEEEDS) shows a compositional bias: acidic residues. Residues serine 676, serine 702, serine 713, serine 714, and serine 721 each carry the phosphoserine modification. Basic and acidic residues predominate over residues 714–725 (SEKLFDDSDERG). Serine 748 is subject to Phosphoserine; by CK2.

It belongs to the HTATSF1 family. As to quaternary structure, component of the 17S U2 SnRNP complex, a ribonucleoprotein complex that contains small nuclear RNA (snRNA) U2 and a number of specific proteins. Within the 17S U2 SnRNP complex, interacts (via UHM region) directly with SF3B1. Component of a complex which is at least composed of HTATSF1/Tat-SF1, the P-TEFb complex components CDK9 and CCNT1, RNA polymerase II, SUPT5H, and NCL/nucleolin. Interacts with GTF2F2/RAP30 and POLR2A. Interacts with TCERG1/CA150. Interacts with (poly-ADP-ribosylated) RPA1; promoting HTATSF1 recruitment to DNA damage sites. Interacts (when phosphorylated) with TOPBP1; promoting recruitment of TOPBP1 to DNA damage sites during S-phase. In terms of processing, phosphorylation at Ser-748 by CK2 during S-phase in response to DNA damage promotes interaction with TOPBP1 and double-strand break (DSB) repair via homologous recombination. As to expression, widely expressed.

It is found in the nucleus. Its subcellular location is the chromosome. In terms of biological role, component of the 17S U2 SnRNP complex of the spliceosome, a large ribonucleoprotein complex that removes introns from transcribed pre-mRNAs. The 17S U2 SnRNP complex (1) directly participates in early spliceosome assembly and (2) mediates recognition of the intron branch site during pre-mRNA splicing by promoting the selection of the pre-mRNA branch-site adenosine, the nucleophile for the first step of splicing. Within the 17S U2 SnRNP complex, HTATSF1 is required to stabilize the branchpoint-interacting stem loop. HTATSF1 is displaced from the 17S U2 SnRNP complex before the stable addition of the 17S U2 SnRNP complex to the spliceosome, destabilizing the branchpoint-interacting stem loop and allowing to probe intron branch site sequences. Also acts as a regulator of transcriptional elongation, possibly by mediating the reciprocal stimulatory effect of splicing on transcriptional elongation. Involved in double-strand break (DSB) repair via homologous recombination in S-phase by promoting the recruitment of TOPBP1 to DNA damage sites. Mechanistically, HTATSF1 is (1) recruited to DNA damage sites in S-phase via interaction with poly-ADP-ribosylated RPA1 and (2) phosphorylated by CK2, promoting recruitment of TOPBP1, thereby facilitating RAD51 nucleofilaments formation and RPA displacement, followed by homologous recombination. (Microbial infection) In case of infection by HIV-1, it is up-regulated by the HIV-1 proteins NEF and gp120, acts as a cofactor required for the Tat-enhanced transcription of the virus. In Homo sapiens (Human), this protein is 17S U2 SnRNP complex component HTATSF1.